Consider the following 364-residue polypeptide: Acetylserotonin O-methyltransferase 1 (364 aa).

S-adenosyl-L-homocysteine is bound by residues Gly208, Asp231, Asp251, and Lys265. His269 acts as the Proton acceptor in catalysis. Active-site residues include Glu300 and Glu330.

It belongs to the class I-like SAM-binding methyltransferase superfamily. Cation-independent O-methyltransferase family. Homodimer. In terms of tissue distribution, expressed in leaves, stems and flowers.

Its subcellular location is the cytoplasm. It carries out the reaction N-acetylserotonin + S-adenosyl-L-methionine = melatonin + S-adenosyl-L-homocysteine + H(+). Its pathway is aromatic compound metabolism; melatonin biosynthesis; melatonin from serotonin: step 1/2. In terms of biological role, methyltransferase which catalyzes the transfer of a methyl group onto N-acetylserotonin, producing melatonin (N-acetyl-5-methoxytryptamine). This Oryza sativa subsp. japonica (Rice) protein is Acetylserotonin O-methyltransferase 1.